We begin with the raw amino-acid sequence, 456 residues long: Acid sphingomyelinase-like phosphodiesterase 3b (456 aa).

The first 18 residues, M1–A18, serve as a signal peptide directing secretion. Zn(2+) contacts are provided by D28 and H30. N34 is a glycosylation site (N-linked (GlcNAc...) asparagine). C45 and C64 are oxidised to a cystine. N-linked (GlcNAc...) asparagine glycosylation occurs at N72. Zn(2+) is bound at residue D93. N100 carries an N-linked (GlcNAc...) asparagine glycan. Position 134 (N134) interacts with Zn(2+). N-linked (GlcNAc...) asparagine glycosylation is found at N164 and N223. The Zn(2+) site is built by H236, H277, and H279. Intrachain disulfides connect C405-C409 and C415-C428.

It belongs to the acid sphingomyelinase family. In terms of assembly, interacts with TLR4, TLR7, TLR8 and TLR9. The cofactor is Zn(2+). N-glycosylated. As to expression, macrophages and dendritic cells.

The protein localises to the secreted. The protein resides in the cell membrane. Functionally, lipid-modulating phosphodiesterase. Active on the surface of macrophages and dendritic cells and strongly influences macrophage lipid composition and membrane fluidity. Acts as a negative regulator of Toll-like receptor signaling. Has in vitro phosphodiesterase activity, but the physiological substrate is unknown. Lacks activity with phosphocholine-containing lipids, but can cleave CDP-choline, and can release phosphate from ATP and ADP (in vitro). In Mus musculus (Mouse), this protein is Acid sphingomyelinase-like phosphodiesterase 3b (Smpdl3b).